The primary structure comprises 298 residues: Lipoyl synthase (298 aa).

[4Fe-4S] cluster-binding residues include Cys-43, Cys-48, Cys-54, Cys-69, Cys-73, Cys-76, and Ser-280. Positions 55–269 (FSSGTATFLI…AACGRGMGIP (215 aa)) constitute a Radical SAM core domain.

The protein belongs to the radical SAM superfamily. Lipoyl synthase family. Requires [4Fe-4S] cluster as cofactor.

Its subcellular location is the cytoplasm. The catalysed reaction is [[Fe-S] cluster scaffold protein carrying a second [4Fe-4S](2+) cluster] + N(6)-octanoyl-L-lysyl-[protein] + 2 oxidized [2Fe-2S]-[ferredoxin] + 2 S-adenosyl-L-methionine + 4 H(+) = [[Fe-S] cluster scaffold protein] + N(6)-[(R)-dihydrolipoyl]-L-lysyl-[protein] + 4 Fe(3+) + 2 hydrogen sulfide + 2 5'-deoxyadenosine + 2 L-methionine + 2 reduced [2Fe-2S]-[ferredoxin]. The protein operates within protein modification; protein lipoylation via endogenous pathway; protein N(6)-(lipoyl)lysine from octanoyl-[acyl-carrier-protein]: step 2/2. Its function is as follows. Catalyzes the radical-mediated insertion of two sulfur atoms into the C-6 and C-8 positions of the octanoyl moiety bound to the lipoyl domains of lipoate-dependent enzymes, thereby converting the octanoylated domains into lipoylated derivatives. The sequence is that of Lipoyl synthase from Nitratidesulfovibrio vulgaris (strain DP4) (Desulfovibrio vulgaris).